The sequence spans 493 residues: Argininosuccinate lyase (493 aa).

This sequence belongs to the lyase 1 family. Argininosuccinate lyase subfamily.

The protein resides in the cytoplasm. The catalysed reaction is 2-(N(omega)-L-arginino)succinate = fumarate + L-arginine. Its pathway is amino-acid biosynthesis; L-arginine biosynthesis; L-arginine from L-ornithine and carbamoyl phosphate: step 3/3. The polypeptide is Argininosuccinate lyase (Clavibacter sepedonicus (Clavibacter michiganensis subsp. sepedonicus)).